We begin with the raw amino-acid sequence, 185 residues long: Ribosome-recycling factor (185 aa).

This sequence belongs to the RRF family.

It localises to the cytoplasm. Its function is as follows. Responsible for the release of ribosomes from messenger RNA at the termination of protein biosynthesis. May increase the efficiency of translation by recycling ribosomes from one round of translation to another. The polypeptide is Ribosome-recycling factor (Beutenbergia cavernae (strain ATCC BAA-8 / DSM 12333 / CCUG 43141 / JCM 11478 / NBRC 16432 / NCIMB 13614 / HKI 0122)).